The sequence spans 188 residues: Adenine phosphoribosyltransferase (188 aa).

134-138 contacts AMP; sequence ATGGS.

Belongs to the purine/pyrimidine phosphoribosyltransferase family. In terms of assembly, homodimer. The cofactor is Mg(2+).

The protein localises to the cytoplasm. It localises to the nucleus. It catalyses the reaction AMP + diphosphate = 5-phospho-alpha-D-ribose 1-diphosphate + adenine. The protein operates within purine metabolism; AMP biosynthesis via salvage pathway; AMP from adenine: step 1/1. Catalyzes a salvage reaction resulting in the formation of AMP, that is energically less costly than de novo synthesis. This is Adenine phosphoribosyltransferase (APT1) from Candida albicans (strain SC5314 / ATCC MYA-2876) (Yeast).